The chain runs to 313 residues: Olfactory receptor 10Z1 (313 aa).

Residues 1 to 25 (MGQTNVTSWRDFVFLGFSSSGELQL) are Extracellular-facing. N-linked (GlcNAc...) asparagine glycosylation is present at Asn-5. The chain crosses the membrane as a helical span at residues 26–46 (LLFALFLSLYLVTLTSNVFII). Over 47 to 54 (IAIRLDSH) the chain is Cytoplasmic. A helical membrane pass occupies residues 55–75 (LHTPMYLFLSFLSFSETCYTL). Residues 76 to 99 (GIIPRMLSGLAGGDQAISYVGCAA) are Extracellular-facing. A disulfide bridge connects residues Cys-97 and Cys-189. A helical transmembrane segment spans residues 100–120 (QMFFSASWACTNCFLLAAMGF). The Cytoplasmic segment spans residues 121-139 (DRYVAICAPLHYASHMNPT). Residues 140-160 (LCAQLVITSFLTGYLFGLGMT) traverse the membrane as a helical segment. The Extracellular portion of the chain corresponds to 161 to 197 (LVIFHLSFCSSHEIQHFFCDTPPVLSLACGDTGPSEL). A helical membrane pass occupies residues 198 to 217 (RIFILSLLVLLVSFFFITIS). Over 218–237 (YAYILAAILRIPSAEGQKKA) the chain is Cytoplasmic. A helical membrane pass occupies residues 238-258 (FSTCASHLTVVIIHYGCASFV). Topologically, residues 259–271 (YLRPKASYSLERD) are extracellular. A helical membrane pass occupies residues 272–292 (QLIAMTYTVVTPLLNPIVYSL). The Cytoplasmic portion of the chain corresponds to 293–313 (RNRAIQTALRNAFRGRLLGKG).

This sequence belongs to the G-protein coupled receptor 1 family.

The protein localises to the cell membrane. Odorant receptor. The polypeptide is Olfactory receptor 10Z1 (OR10Z1) (Homo sapiens (Human)).